The primary structure comprises 285 residues: GTP-binding protein 8 (285 aa).

Residues 110-283 (QQPEVCFIGR…KCFIADITGS (174 aa)) form the EngB-type G domain. GTP contacts are provided by residues 118-125 (GRSNVGKS), 147-151 (GHTKK), 165-168 (DMPG), 227-230 (TKID), and 262-264 (ISA). Positions 125 and 149 each coordinate Mg(2+).

This sequence belongs to the TRAFAC class TrmE-Era-EngA-EngB-Septin-like GTPase superfamily. EngB GTPase family. Mg(2+) is required as a cofactor.

In Mus musculus (Mouse), this protein is GTP-binding protein 8 (Gtpbp8).